The following is an 84-amino-acid chain: Large ribosomal subunit protein bL27 (84 aa).

The segment at 1 to 21 (MAHKKGQGSTRNGRDSHSKRL) is disordered. Over residues 12-21 (NGRDSHSKRL) the composition is skewed to basic and acidic residues.

Belongs to the bacterial ribosomal protein bL27 family.

The protein is Large ribosomal subunit protein bL27 of Methylacidiphilum infernorum (isolate V4) (Methylokorus infernorum (strain V4)).